A 122-amino-acid polypeptide reads, in one-letter code: Probable transcription factor PqrA (122 aa).

Residues 7–107 enclose the HTH araC/xylS-type domain; it reads NDILKWLETQ…NTTPAKFREN (101 aa). 2 DNA-binding regions (H-T-H motif) span residues 26–47 and 74–97; these read DTIANKSGYSKWHLQRIFKDFK and ILDIALMYGFSSQATFTRIFKKHF.

Upon expression in E.coli strain KY2563 confers resistance to antibiotics ofloxacin, ciprofloxacin, tetracycline, chloramphenicol, and ceftazidime (increases minimal inhibitory concentration by 8-32 times); also decreases expression of OmpF. The protein is Probable transcription factor PqrA of Proteus vulgaris.